We begin with the raw amino-acid sequence, 51 residues long: Nawaprin (51 aa).

The WAP domain occupies 1 to 50 (NEKSGSCPDMSMPIPPLGICKTLCNSDSGCPNVQKCCKNGCGFMTCTTPV). Intrachain disulfides connect Cys7-Cys37, Cys20-Cys41, Cys24-Cys36, and Cys30-Cys46.

Expressed by the venom gland.

Its subcellular location is the secreted. Damages membranes of susceptible bacteria. Has no hemolytic activity. Not toxic to mice. Does not inhibit the proteinases elastase and cathepsin G. This Naja nigricollis (Black-necked spitting cobra) protein is Nawaprin.